Here is a 670-residue protein sequence, read N- to C-terminus: Solute carrier organic anion transporter family member 1A3 (670 aa).

The Cytoplasmic segment spans residues 1-20 (MGDLEKGAATHGAGCFAKIK). The chain crosses the membrane as a helical span at residues 21–40 (VFLMALTCAYVSKSLSGTFM). Residues 41-59 (SSMLTQIERQFGIPTAIVG) lie on the Extracellular side of the membrane. The helical transmembrane segment at 60-80 (FINGSFEIGNLLLIIFVSYFG) threads the bilayer. Over 81-86 (MKLHRP) the chain is Cytoplasmic. The chain crosses the membrane as a helical span at residues 87 to 111 (IVIGVGCAVMGLGCFIISLPHFLMG). The Extracellular portion of the chain corresponds to 112-155 (RYEYETTILPTSNLSSNSFLCMENQTQTLNPAQDPAECVKEVKS). Residues Asn124 and Asn135 are each glycosylated (N-linked (GlcNAc...) asparagine). Residues 156–184 (LMWIYVLVGNIIRGIGETPIMPLGVSYIE) form a helical membrane-spanning segment. At 185–203 (NFAKSENSPLYIGILETGK) the chain is on the cytoplasmic side. The chain crosses the membrane as a helical span at residues 204 to 224 (MIGPIFGLLLGSFCASIYVDT). The Extracellular portion of the chain corresponds to 225–242 (GSVNTDDLTITPTDIRWV). A helical transmembrane segment spans residues 243–267 (GAWWIGFLVCAGVNILISIPFFFFP). Residues 268–311 (KTLPKEGLQENVDGTENAKEESTEKRPRKKNRGITKDFFPFLKS) are Cytoplasmic-facing. The tract at residues 277–296 (ENVDGTENAKEESTEKRPRK) is disordered. Over residues 283–292 (ENAKEESTEK) the composition is skewed to basic and acidic residues. A helical transmembrane segment spans residues 312–333 (PVLQPDLHAVHPYKVLQVNAFN). Over 334–353 (IYFSFLPKYLENQYGKSTAE) the chain is Extracellular. A helical membrane pass occupies residues 354 to 377 (VIFLMGVYNLPAICIGYLIAGFMM). Topologically, residues 378–381 (KKFK) are cytoplasmic. A helical membrane pass occupies residues 382–405 (ITVKTAAFLAFCLSLSEYSFGFCN). The Extracellular portion of the chain corresponds to 406–513 (FLITCDNVPV…PECTNKLQYL (108 aa)). The Kazal-like domain maps to 433–488 (NNVLADCNTRCSCLTKTWDPVCGDNGLAYMSACLAGCEKSVGTGTNMVFHNCSCIQ). 3 cysteine pairs are disulfide-bonded: Cys439-Cys469, Cys445-Cys465, and Cys454-Cys486. N-linked (GlcNAc...) asparagine glycans are attached at residues Asn483 and Asn492. Residues 514 to 536 (LILSGFLSILYSFAAIPGYMVFL) form a helical membrane-spanning segment. At 537–545 (RCIKSEEKS) the chain is on the cytoplasmic side. A helical membrane pass occupies residues 546 to 571 (LGIGIHAFCIRVFAGIPAPIYFGALI). Over 572–605 (DRTCLHWGTQKCGAPGACRMYDINSFRRIYLGMS) the chain is Extracellular. A helical membrane pass occupies residues 606 to 623 (AALRGSSYLPAFVIVILT). Over 624-670 (RKFSLPGKINSSEMEIAEMKLTEKESQCTDVHRNPKFKNDGELKTKL) the chain is Cytoplasmic.

It belongs to the organo anion transporter (TC 2.A.60) family. In terms of tissue distribution, all isoforms are detected in kidney, and many are kidney specific. Isoforms 2 and 13 are also detected in liver. Isoforms 4 and 9/K4 are ubiquitous, but isoform 9/K13 is kidney specific. Isoforms 5 and 14 are detected in all tissues tested, with the exception of pancreas and spleen. Isoforms 11 and 15 are detected in kidney, pancreas and testis. Isoform 7 is detected in kidney, liver, testis and spleen.

The protein resides in the cell membrane. Its function is as follows. Mediates the Na(+)-independent transport of organic anions such as methotrexate, taurocholate, folate and prostaglandin E2. May contribute to renal secretion and/or reabsorption of hydrophobic anionic compounds. Mediates renal clearance of methotrexate from the blood. The protein is Solute carrier organic anion transporter family member 1A3 (Slco1a3) of Rattus norvegicus (Rat).